A 273-amino-acid polypeptide reads, in one-letter code: Formamidopyrimidine-DNA glycosylase (273 aa).

The Schiff-base intermediate with DNA role is filled by proline 2. The active-site Proton donor is the glutamate 3. The active-site Proton donor; for beta-elimination activity is the lysine 58. 3 residues coordinate DNA: histidine 92, arginine 111, and lysine 153. Residues lysine 238–tyrosine 272 form an FPG-type zinc finger. The active-site Proton donor; for delta-elimination activity is arginine 262.

Belongs to the FPG family. Monomer. The cofactor is Zn(2+).

The enzyme catalyses Hydrolysis of DNA containing ring-opened 7-methylguanine residues, releasing 2,6-diamino-4-hydroxy-5-(N-methyl)formamidopyrimidine.. It carries out the reaction 2'-deoxyribonucleotide-(2'-deoxyribose 5'-phosphate)-2'-deoxyribonucleotide-DNA = a 3'-end 2'-deoxyribonucleotide-(2,3-dehydro-2,3-deoxyribose 5'-phosphate)-DNA + a 5'-end 5'-phospho-2'-deoxyribonucleoside-DNA + H(+). Its function is as follows. Involved in base excision repair of DNA damaged by oxidation or by mutagenic agents. Acts as a DNA glycosylase that recognizes and removes damaged bases. Has a preference for oxidized purines, such as 7,8-dihydro-8-oxoguanine (8-oxoG). Has AP (apurinic/apyrimidinic) lyase activity and introduces nicks in the DNA strand. Cleaves the DNA backbone by beta-delta elimination to generate a single-strand break at the site of the removed base with both 3'- and 5'-phosphates. The protein is Formamidopyrimidine-DNA glycosylase of Rickettsia peacockii (strain Rustic).